A 374-amino-acid polypeptide reads, in one-letter code: Alcohol dehydrogenase class-3 (374 aa).

The residue at position 2 (alanine 2) is an N-acetylalanine. Residues cysteine 45, histidine 67, cysteine 97, cysteine 100, cysteine 103, cysteine 111, and cysteine 174 each coordinate Zn(2+). At lysine 233 the chain carries N6-succinyllysine. Position 247 is a phosphoserine (serine 247). Lysine 315 bears the N6-succinyllysine mark. Position 324 is a phosphoserine (serine 324).

It belongs to the zinc-containing alcohol dehydrogenase family. Class-III subfamily. In terms of assembly, homodimer. It depends on Zn(2+) as a cofactor.

The protein resides in the cytoplasm. The enzyme catalyses a primary alcohol + NAD(+) = an aldehyde + NADH + H(+). It catalyses the reaction a secondary alcohol + NAD(+) = a ketone + NADH + H(+). The catalysed reaction is S-(hydroxymethyl)glutathione + NADP(+) = S-formylglutathione + NADPH + H(+). It carries out the reaction S-(hydroxymethyl)glutathione + NAD(+) = S-formylglutathione + NADH + H(+). The enzyme catalyses 20-oxo-(5Z,8Z,11Z,14Z)-eicosatetraenoate + NAD(+) + H2O = (5Z,8Z,11Z,14Z)-eicosatetraenedioate + NADH + 2 H(+). It catalyses the reaction 20-hydroxy-(5Z,8Z,11Z,14Z)-eicosatetraenoate + NAD(+) = 20-oxo-(5Z,8Z,11Z,14Z)-eicosatetraenoate + NADH + H(+). The catalysed reaction is S-nitrosoglutathione + NADH + H(+) = S-(hydroxysulfenamide)glutathione + NAD(+). Functionally, catalyzes the oxidation of long-chain primary alcohols and the oxidation of S-(hydroxymethyl) glutathione. Also oxidizes long chain omega-hydroxy fatty acids, such as 20-HETE, producing both the intermediate aldehyde, 20-oxoarachidonate and the end product, a dicarboxylic acid, (5Z,8Z,11Z,14Z)-eicosatetraenedioate. Class-III ADH is remarkably ineffective in oxidizing ethanol. Required for clearance of cellular formaldehyde, a cytotoxic and carcinogenic metabolite that induces DNA damage. Also acts as a S-nitroso-glutathione reductase by catalyzing the NADH-dependent reduction of S-nitrosoglutathione, thereby regulating protein S-nitrosylation. The protein is Alcohol dehydrogenase class-3 of Bos taurus (Bovine).